The chain runs to 97 residues: Large ribosomal subunit protein eL21 (97 aa).

Belongs to the eukaryotic ribosomal protein eL21 family.

In Methanococcoides burtonii (strain DSM 6242 / NBRC 107633 / OCM 468 / ACE-M), this protein is Large ribosomal subunit protein eL21.